The sequence spans 584 residues: MEYRILAEFYERIEKTTSRIEMVSSLVELFKQTPKELIDKVVYLSIGKIAPEYTGLDYNFGEKLAIRALSRVLKIPALEIEKRVRQEGDLGEAGRKLYEELGFKPEGTLTVEEVYNGLLNIAKAVGIGSQERKISIFASLLKKATPLEAKYLLRTITERLRLGIGDNTILEALSIAFTGSSVNREVVERAYNLTSDLGYVAKILAEKGLEGVKQVKIQVGRPVRPMLAERMSSPILILRKLGGKCGAEYKYDGERIQAHRKGDEFYLFSRRLENITHQYPDLIEFLKEAIPHDFIVELEAVVIDPASGEIRPFQELMHRKVKYVTKYHITKYPVAGFLFDIIYLDGEDLTLKPYPERREILEKVVKRTDRIGLVPRKIVDNVEDLENFFYQAIEEGCEGLVCKSLAPNSIYQAGKRGFLWIKYKRDYKSVLADTLDLVVVGGFYGKGQRKGTFGSLLMACYDPESDMFKTVTKVGTGFTEDDFKKLEEILMPRKLNHRHPRVNSILEADMWFEPYLVLEITGAELTLSPVHTCGWGKVSPNRGIGLRFPRFTGRYRFDKRPEDATTEQEIIEMYRMQRKIRVRS.

Glu248 is a binding site for ATP. The active-site N6-AMP-lysine intermediate is the Lys250. The ATP site is built by Arg255, Arg270, Glu299, Phe339, Arg416, and Lys422.

The protein belongs to the ATP-dependent DNA ligase family. It depends on Mg(2+) as a cofactor.

It carries out the reaction ATP + (deoxyribonucleotide)n-3'-hydroxyl + 5'-phospho-(deoxyribonucleotide)m = (deoxyribonucleotide)n+m + AMP + diphosphate.. Functionally, DNA ligase that seals nicks in double-stranded DNA during DNA replication, DNA recombination and DNA repair. The sequence is that of Probable DNA ligase from Aquifex aeolicus (strain VF5).